The sequence spans 207 residues: Dephospho-CoA kinase (207 aa).

One can recognise a DPCK domain in the interval 11–207 (RIGLTGGIAS…LLKMSPTAEL (197 aa)). 19 to 24 (ASGKSS) contributes to the ATP binding site.

Belongs to the CoaE family.

The protein resides in the cytoplasm. It carries out the reaction 3'-dephospho-CoA + ATP = ADP + CoA + H(+). It participates in cofactor biosynthesis; coenzyme A biosynthesis; CoA from (R)-pantothenate: step 5/5. Catalyzes the phosphorylation of the 3'-hydroxyl group of dephosphocoenzyme A to form coenzyme A. This is Dephospho-CoA kinase from Synechococcus sp. (strain CC9605).